Here is an 89-residue protein sequence, read N- to C-terminus: UPF0367 protein CYA_1023 (89 aa).

The disordered stretch occupies residues 69–89; sequence TKSGGPGAPGTRPGFLAQLQG.

The protein belongs to the UPF0367 family.

The chain is UPF0367 protein CYA_1023 from Synechococcus sp. (strain JA-3-3Ab) (Cyanobacteria bacterium Yellowstone A-Prime).